Here is a 533-residue protein sequence, read N- to C-terminus: Putative adhesin domain-containing protein LiaX (533 aa).

The interval 1 to 277 is binds the antibiotic daptomycin (DAP) and the antimicrobial peptide human LL-37, under physiologically relevant concentrations. Protects the OG1RF and S613 strains from LL-37-mediated killing in a concentration-dependent manner; it reads MKERERVLEL…EFNYPNPQAS (277 aa). Residues 63-89 form a disordered region; that stretch reads NALEKGESEGPTVDSFEENTQDSAEKD. The stretch at 83-186 forms a coiled coil; the sequence is QDSAEKDREN…EEELKNIRKE (104 aa). The interval 279 to 526 is putative adhesin region; it reads IDVKVANGTV…INASTTTGSI (248 aa). Positions 289–526 are involved in cell membrane remodeling; the sequence is VFKTWDQEDV…INASTTTGSI (238 aa).

In terms of processing, may undergo proteolytic cleavage, allowing release of the N-terminal region into the extracellular environment.

The protein localises to the secreted. It is found in the cell wall. The protein resides in the cell membrane. In terms of biological role, involved in cell membrane remodeling, perhaps acting by negative modulation of the liaFSR and liaXYZ gene clusters, thereby regulating content and localization of anionic phospholipids. Binds to the antibiotic daptomycin (DAP) and to cationic antimicrobial peptides, such as human LL-37, perhaps functioning as a sensor that activates the cell envelope stress response. In Enterococcus faecalis (strain ATCC 700802 / V583), this protein is Putative adhesin domain-containing protein LiaX.